Consider the following 232-residue polypeptide: Ribonuclease HII (232 aa).

The 193-residue stretch at 26-218 (RILCGVDEAG…VRRALEGMSA (193 aa)) folds into the RNase H type-2 domain. 3 residues coordinate a divalent metal cation: aspartate 32, glutamate 33, and aspartate 127.

Belongs to the RNase HII family. The cofactor is Mn(2+). Mg(2+) is required as a cofactor.

The protein localises to the cytoplasm. It carries out the reaction Endonucleolytic cleavage to 5'-phosphomonoester.. Its function is as follows. Endonuclease that specifically degrades the RNA of RNA-DNA hybrids. The sequence is that of Ribonuclease HII from Ralstonia pickettii (strain 12J).